The chain runs to 214 residues: Sugar transporter SWEET1 (214 aa).

Helical transmembrane passes span 3 to 23, 38 to 58, 65 to 85, 93 to 113, 125 to 145, 157 to 177, and 181 to 201; these read WMWL…SSGL, IQFL…YYGY, LIIV…AYIL, VVSQ…YFTL, LGLF…ADLA, SFPL…YGWV, and LYIT…FWLF. The region spanning 6–89 is the MtN3/slv 1 domain; it reads LLSGACIVFT…MAAYILYSLE (84 aa). Positions 124–207 constitute a MtN3/slv 2 domain; the sequence is QLGLFCSIFT…FWLFSRYPPD (84 aa).

The protein belongs to the SWEET sugar transporter family.

The protein resides in the golgi apparatus membrane. Its subcellular location is the cell membrane. In terms of biological role, mediates sugar transport across membranes. This Xenopus tropicalis (Western clawed frog) protein is Sugar transporter SWEET1 (slc50a1).